Reading from the N-terminus, the 617-residue chain is Hemagglutinin glycoprotein (617 aa).

Topologically, residues 1 to 37 (MSPQRDRINAFYKDNPHPKGSRIVINREHLMIDRPYV) are intravirion. A stalk region spans residues 1–154 (MSPQRDRINA…RIKLDYDQYC (154 aa)). The chain crosses the membrane as a helical; Signal-anchor for type II membrane protein span at residues 38 to 58 (LLAVLFVMFLSLIGLLAIAGI). The Virion surface portion of the chain corresponds to 59–617 (RLHRAAIYTA…VTREDGTNRR (559 aa)). Residues Asn168, Asn187, Asn200, Asn215, and Asn238 are each glycosylated (N-linked (GlcNAc...) asparagine; by host). Disulfide bonds link Cys188-Cys606, Cys287-Cys300, Cys381-Cys494, Cys386-Cys394, and Cys570-Cys579. The tract at residues 458–543 (PMKNLALGVI…VEHAVVYYVY (86 aa)) is interaction with host NECTIN4 receptor.

Belongs to the paramyxoviruses hemagglutinin-neuraminidase family. Non-sialidase subfamily. As to quaternary structure, homodimer; disulfide-linked. Further forms homotetramer (dimer of dimers). Interacts (via C-terminus) with human NECTIN4 (via N-terminus); this interaction allows attachment to the respiratory epithelium and viral entry. Interacts (via C-terminus) with human SLAMF1/CD150 (via N-terminus); this interaction allows attachment and viral entry into the CD150-expressing immune cells. Interacts with human CD46 antigen; this interaction allows attachment and viral entry of vaccine and laboratory-adapted strains.

It is found in the virion membrane. Its subcellular location is the host cell membrane. In terms of biological role, attaches the virus to the human SLAMF1/CD150 receptor for entry into host dendritic cells, macrophages, activated memory T cells and naive or memory B cells, thereby explaining the long immunosuppression that follows infection. In the respiratory airways, binds to the NECTIN4 receptor for entry into the host cell. Binding of H protein to the receptor induces a conformational change that allows the F protein to trigger virion/cell membranes fusion. The vaccine and laboratory-adapted strains use host CD46 as an alternate receptor. The high degree of interaction between H and CD46 results in down-regulation of the latter from the surface of infected cells, rendering them more sensitive to c3b-mediated complement lysis. This chain is Hemagglutinin glycoprotein (H), found in Homo sapiens (Human).